Here is a 182-residue protein sequence, read N- to C-terminus: Large ribosomal subunit protein uL10 (182 aa).

Belongs to the universal ribosomal protein uL10 family. In terms of assembly, part of the ribosomal stalk of the 50S ribosomal subunit. The N-terminus interacts with L11 and the large rRNA to form the base of the stalk. The C-terminus forms an elongated spine to which L12 dimers bind in a sequential fashion forming a multimeric L10(L12)X complex.

Forms part of the ribosomal stalk, playing a central role in the interaction of the ribosome with GTP-bound translation factors. In Koribacter versatilis (strain Ellin345), this protein is Large ribosomal subunit protein uL10.